A 316-amino-acid chain; its full sequence is Coiled-coil domain-containing protein 42 (316 aa).

2 coiled-coil regions span residues 43-151 (RLLE…EYSI) and 182-236 (HHDL…SDVI).

Belongs to the CFAP73 family. As to quaternary structure, interacts with ODF1 and ODF2. Interacts with CCDC38. Interacts with CCDC146. Interacts with CFAP53.

It is found in the cytoplasm. Its subcellular location is the perinuclear region. It localises to the cytoskeleton. The protein localises to the cell projection. The protein resides in the cilium. It is found in the flagellum. Its subcellular location is the microtubule organizing center. It localises to the centrosome. Essential for male fertility. Required for sperm development. The protein is Coiled-coil domain-containing protein 42 of Bos taurus (Bovine).